We begin with the raw amino-acid sequence, 550 residues long: Glucose-6-phosphate isomerase (550 aa).

The active-site Proton donor is the glutamate 356. Active-site residues include histidine 387 and lysine 515.

Belongs to the GPI family.

The protein localises to the cytoplasm. The catalysed reaction is alpha-D-glucose 6-phosphate = beta-D-fructose 6-phosphate. It functions in the pathway carbohydrate biosynthesis; gluconeogenesis. The protein operates within carbohydrate degradation; glycolysis; D-glyceraldehyde 3-phosphate and glycerone phosphate from D-glucose: step 2/4. In terms of biological role, catalyzes the reversible isomerization of glucose-6-phosphate to fructose-6-phosphate. This Syntrophobacter fumaroxidans (strain DSM 10017 / MPOB) protein is Glucose-6-phosphate isomerase.